The following is a 314-amino-acid chain: Olfactory receptor 9Q2 (314 aa).

Residues 1 to 25 lie on the Extracellular side of the membrane; it reads MAERNYTVVTEFFLTAFTEHLQWRV. An N-linked (GlcNAc...) asparagine glycan is attached at Asn5. Residues 26-46 traverse the membrane as a helical segment; sequence PLFLIFLSFYLATMLGNTGMI. The Cytoplasmic portion of the chain corresponds to 47–54; that stretch reads LLIRGDRR. The helical transmembrane segment at 55 to 75 threads the bilayer; it reads LHTPMYFFLSHLSLVDICYSS. Over 76 to 99 the chain is Extracellular; the sequence is AIIPQMLAVLWEHGTTISQARCAA. Cys97 and Cys189 are disulfide-bonded. A helical membrane pass occupies residues 100–120; that stretch reads QFFLFTFFASIDCYLLAIMAY. Residues 121–139 are Cytoplasmic-facing; the sequence is DRYTAVCQPLLYVTIITEK. Residues 140-160 traverse the membrane as a helical segment; it reads ARWGLVTGAYVAGFFSAFVRT. Topologically, residues 161-197 are extracellular; it reads VTAFTLSFCGNNEINFIFCDLPPLLKLSCGDSYTQEV. Residues 198 to 217 form a helical membrane-spanning segment; the sequence is VIIVFALFVMPACILVILVS. Topologically, residues 218-237 are cytoplasmic; the sequence is YLFIIVAILQIHSAGGRAKT. A helical membrane pass occupies residues 238-258; the sequence is FSTCASHLTAVALFFGTLIFM. The Extracellular segment spans residues 259-271; sequence YLRDNTGQSSEGD. A helical transmembrane segment spans residues 272-292; that stretch reads RVVSVLYTVVTPMLNPLIYSL. Residues 293–314 lie on the Cytoplasmic side of the membrane; it reads RNKEVKEATRKALSKSKPARRP.

This sequence belongs to the G-protein coupled receptor 1 family.

The protein localises to the cell membrane. Odorant receptor. This chain is Olfactory receptor 9Q2 (OR9Q2), found in Homo sapiens (Human).